Consider the following 701-residue polypeptide: Elongation factor G (701 aa).

The tr-type G domain maps to 8–290 (SLYRNIGISA…AVVELLPAPT (283 aa)). Residues 17–24 (AHIDAGKT), 88–92 (DTPGH), and 142–145 (NKMD) each bind GTP.

This sequence belongs to the TRAFAC class translation factor GTPase superfamily. Classic translation factor GTPase family. EF-G/EF-2 subfamily.

The protein resides in the cytoplasm. Its function is as follows. Catalyzes the GTP-dependent ribosomal translocation step during translation elongation. During this step, the ribosome changes from the pre-translocational (PRE) to the post-translocational (POST) state as the newly formed A-site-bound peptidyl-tRNA and P-site-bound deacylated tRNA move to the P and E sites, respectively. Catalyzes the coordinated movement of the two tRNA molecules, the mRNA and conformational changes in the ribosome. This is Elongation factor G from Neisseria gonorrhoeae (strain ATCC 700825 / FA 1090).